The chain runs to 184 residues: MVKANYIRAGRLVRIIRGPRQDRVGVIVDIVDANRVLVENPSDVKMWRHVQSLKNVEPLRLCVPISRNCSSKVLKEAMATAKTLEKYANTKSAIRIAAKKAFAESTDFERYQLRVAKRSRAYWSRKIFDENDKKNPVSWHKVALKKLQKNAKKVDSTPAAKKRIEKARAARKAKPTAAKEKSKK.

Residues 149–184 (KNAKKVDSTPAAKKRIEKARAARKAKPTAAKEKSKK) are disordered. Positions 160 to 174 (AKKRIEKARAARKAK) are enriched in basic residues.

Belongs to the eukaryotic ribosomal protein eL14 family.

The polypeptide is Large ribosomal subunit protein eL14 (Trypanosoma congolense).